The following is a 507-amino-acid chain: UDP-N-acetylhexosamine pyrophosphorylase-like protein 1 (507 aa).

Positions 56-91 are disordered; it reads ACARPHGPPPDLAARLRPLPPERVGRASRSDPETRR. Basic and acidic residues predominate over residues 78–91; that stretch reads RVGRASRSDPETRR. Residues 111-114 carry the Substrate binding motif; sequence LAGG. UTP contacts are provided by residues 111 to 114, K125, Q199, and G225; that span reads LAGG. Residue N226 coordinates substrate. D256 contacts UTP. The short motif at 306–307 is the Substrate binding element; it reads EY. K380 lines the UTP pocket. K410 contacts substrate.

The protein belongs to the UDPGP type 1 family.

The chain is UDP-N-acetylhexosamine pyrophosphorylase-like protein 1 (UAP1L1) from Homo sapiens (Human).